Reading from the N-terminus, the 284-residue chain is Nodulation protein O (284 aa).

Residues Met1–Asn27 are disordered. Hemolysin-type calcium-binding repeat units follow at residues Lys13–Ile30, Asp31–Ile48, Trp58–Leu75, His94–Leu111, and Val112–Phe129. Asp100, Asp109, Asp118, and Asp127 together coordinate Ca(2+). Residues Asp208–Asp222 are export signal (aspartic acid box).

The protein resides in the secreted. In terms of biological role, the NodO protein may play a role in nodule development by direct interaction with the root hair cells or some other plant surface in a calcium-dependent manner. In Rhizobium leguminosarum bv. viciae, this protein is Nodulation protein O (nodO).